We begin with the raw amino-acid sequence, 566 residues long: Proline--tRNA ligase (566 aa).

The protein belongs to the class-II aminoacyl-tRNA synthetase family. ProS type 1 subfamily. In terms of assembly, homodimer.

It is found in the cytoplasm. The catalysed reaction is tRNA(Pro) + L-proline + ATP = L-prolyl-tRNA(Pro) + AMP + diphosphate. In terms of biological role, catalyzes the attachment of proline to tRNA(Pro) in a two-step reaction: proline is first activated by ATP to form Pro-AMP and then transferred to the acceptor end of tRNA(Pro). As ProRS can inadvertently accommodate and process non-cognate amino acids such as alanine and cysteine, to avoid such errors it has two additional distinct editing activities against alanine. One activity is designated as 'pretransfer' editing and involves the tRNA(Pro)-independent hydrolysis of activated Ala-AMP. The other activity is designated 'posttransfer' editing and involves deacylation of mischarged Ala-tRNA(Pro). The misacylated Cys-tRNA(Pro) is not edited by ProRS. This is Proline--tRNA ligase from Coxiella burnetii (strain RSA 493 / Nine Mile phase I).